Consider the following 207-residue polypeptide: Guanylate kinase (207 aa).

The region spanning G17 to V197 is the Guanylate kinase-like domain. G24–S31 is a binding site for ATP.

The protein belongs to the guanylate kinase family.

The protein localises to the cytoplasm. The enzyme catalyses GMP + ATP = GDP + ADP. Functionally, essential for recycling GMP and indirectly, cGMP. The protein is Guanylate kinase of Rhodococcus jostii (strain RHA1).